Here is a 77-residue protein sequence, read N- to C-terminus: Conotoxin ArMSGL-0141 (77 aa).

The N-terminal stretch at 1–18 (MSGLGILVLTLLLLVYMA) is a signal peptide. The propeptide occupies 19–44 (TSHQDAGEKQATQRDAINVRRRRSLT). Intrachain disulfides connect cysteine 51–cysteine 63, cysteine 55–cysteine 71, and cysteine 62–cysteine 75. Phenylalanine 76 is subject to Phenylalanine amide.

It belongs to the conotoxin O3 superfamily. As to expression, expressed by the venom duct.

It is found in the secreted. In Conus arenatus (Sand-dusted cone), this protein is Conotoxin ArMSGL-0141.